A 176-amino-acid polypeptide reads, in one-letter code: NAD(P)H-quinone oxidoreductase subunit 6, chloroplastic (176 aa).

The next 5 helical transmembrane spans lie at 10-30 (FLLV…VLLT), 32-52 (PIFS…FHIP), 60-80 (AAQL…AVMF), 107-127 (IFVS…IWTT), and 152-172 (FFLP…GAIA).

The protein belongs to the complex I subunit 6 family. As to quaternary structure, NDH is composed of at least 16 different subunits, 5 of which are encoded in the nucleus.

It is found in the plastid. It localises to the chloroplast thylakoid membrane. It carries out the reaction a plastoquinone + NADH + (n+1) H(+)(in) = a plastoquinol + NAD(+) + n H(+)(out). The enzyme catalyses a plastoquinone + NADPH + (n+1) H(+)(in) = a plastoquinol + NADP(+) + n H(+)(out). NDH shuttles electrons from NAD(P)H:plastoquinone, via FMN and iron-sulfur (Fe-S) centers, to quinones in the photosynthetic chain and possibly in a chloroplast respiratory chain. The immediate electron acceptor for the enzyme in this species is believed to be plastoquinone. Couples the redox reaction to proton translocation, and thus conserves the redox energy in a proton gradient. In Buxus microphylla (Littleleaf boxwood), this protein is NAD(P)H-quinone oxidoreductase subunit 6, chloroplastic (ndhG).